Reading from the N-terminus, the 344-residue chain is Arginine N-succinyltransferase (344 aa).

Leucine 125 contacts succinyl-CoA. Histidine 229 acts as the Proton donor in catalysis.

This sequence belongs to the arginine N-succinyltransferase family.

The catalysed reaction is succinyl-CoA + L-arginine = N(2)-succinyl-L-arginine + CoA + H(+). It participates in amino-acid degradation; L-arginine degradation via AST pathway; L-glutamate and succinate from L-arginine: step 1/5. Catalyzes the transfer of succinyl-CoA to arginine to produce N(2)-succinylarginine. The sequence is that of Arginine N-succinyltransferase from Escherichia coli (strain UTI89 / UPEC).